The sequence spans 227 residues: 2-C-methyl-D-erythritol 4-phosphate cytidylyltransferase (227 aa).

This sequence belongs to the IspD/TarI cytidylyltransferase family. IspD subfamily.

It carries out the reaction 2-C-methyl-D-erythritol 4-phosphate + CTP + H(+) = 4-CDP-2-C-methyl-D-erythritol + diphosphate. The protein operates within isoprenoid biosynthesis; isopentenyl diphosphate biosynthesis via DXP pathway; isopentenyl diphosphate from 1-deoxy-D-xylulose 5-phosphate: step 2/6. Functionally, catalyzes the formation of 4-diphosphocytidyl-2-C-methyl-D-erythritol from CTP and 2-C-methyl-D-erythritol 4-phosphate (MEP). The sequence is that of 2-C-methyl-D-erythritol 4-phosphate cytidylyltransferase from Petrotoga mobilis (strain DSM 10674 / SJ95).